A 227-amino-acid polypeptide reads, in one-letter code: ATP-dependent dethiobiotin synthetase BioD (227 aa).

Residue 13-18 coordinates ATP; that stretch reads DVGKTV. Mg(2+) is bound at residue Thr17. The active site involves Lys38. Residues Asp55, 116 to 119, and 176 to 177 contribute to the ATP site; these read EGAG and NR. Residues Asp55 and Glu116 each coordinate Mg(2+).

This sequence belongs to the dethiobiotin synthetase family. Homodimer. Requires Mg(2+) as cofactor.

It is found in the cytoplasm. It carries out the reaction (7R,8S)-7,8-diammoniononanoate + CO2 + ATP = (4R,5S)-dethiobiotin + ADP + phosphate + 3 H(+). It functions in the pathway cofactor biosynthesis; biotin biosynthesis; biotin from 7,8-diaminononanoate: step 1/2. In terms of biological role, catalyzes a mechanistically unusual reaction, the ATP-dependent insertion of CO2 between the N7 and N8 nitrogen atoms of 7,8-diaminopelargonic acid (DAPA, also called 7,8-diammoniononanoate) to form a ureido ring. This Aliivibrio salmonicida (strain LFI1238) (Vibrio salmonicida (strain LFI1238)) protein is ATP-dependent dethiobiotin synthetase BioD.